The following is a 142-amino-acid chain: Universal stress protein C (142 aa).

The protein belongs to the universal stress protein A family.

Its subcellular location is the cytoplasm. Its function is as follows. Required for resistance to DNA-damaging agents. The sequence is that of Universal stress protein C (uspC) from Escherichia coli O157:H7.